Consider the following 238-residue polypeptide: Urease subunit alpha (238 aa).

A urease gamma region spans residues Met-1–Ala-102. The urease beta stretch occupies residues Asn-103 to Glu-238.

The protein in the N-terminal section; belongs to the urease gamma subunit family. In the C-terminal section; belongs to the urease beta subunit family. As to quaternary structure, heterohexamer of 3 UreA (alpha) and 3 UreB (beta) subunits.

Its subcellular location is the cytoplasm. It catalyses the reaction urea + 2 H2O + H(+) = hydrogencarbonate + 2 NH4(+). It functions in the pathway nitrogen metabolism; urea degradation; CO(2) and NH(3) from urea (urease route): step 1/1. This is Urease subunit alpha from Helicobacter pylori (strain P12).